Consider the following 134-residue polypeptide: MAEQSDKDVKYYTLEEIQKHKDSKSTWVILHHKVYDLTKFLEEHPGGEEVLREQAGGDATENFEDVGHSTDARELSKTYIIGELHPDDRSKIAKPSETLITTVESNSSWWTNWVIPAISALVVALMYRLYMAED.

Ala2 is subject to N-acetylalanine. 3 positions are modified to N6-acetyllysine: Lys7, Lys10, and Lys19. One can recognise a Cytochrome b5 heme-binding domain in the interval 9 to 85 (VKYYTLEEIQ…SKTYIIGELH (77 aa)). Heme contacts are provided by His44 and His68. A helical transmembrane segment spans residues 109-131 (WWTNWVIPAISALVVALMYRLYM).

This sequence belongs to the cytochrome b5 family.

Its subcellular location is the endoplasmic reticulum membrane. The protein resides in the microsome membrane. Its function is as follows. Cytochrome b5 is a membrane-bound hemoprotein functioning as an electron carrier for several membrane-bound oxygenases. It is also involved in several steps of the sterol biosynthesis pathway, particularly in the C-6 double bond introduction during the C-6 desaturation. This is Cytochrome b5 (Cyb5a) from Rattus norvegicus (Rat).